The chain runs to 239 residues: 1-(5-phosphoribosyl)-5-[(5-phosphoribosylamino)methylideneamino] imidazole-4-carboxamide isomerase (239 aa).

The Proton acceptor role is filled by aspartate 8. Aspartate 129 (proton donor) is an active-site residue.

This sequence belongs to the HisA/HisF family.

The protein localises to the cytoplasm. It carries out the reaction 1-(5-phospho-beta-D-ribosyl)-5-[(5-phospho-beta-D-ribosylamino)methylideneamino]imidazole-4-carboxamide = 5-[(5-phospho-1-deoxy-D-ribulos-1-ylimino)methylamino]-1-(5-phospho-beta-D-ribosyl)imidazole-4-carboxamide. The protein operates within amino-acid biosynthesis; L-histidine biosynthesis; L-histidine from 5-phospho-alpha-D-ribose 1-diphosphate: step 4/9. The sequence is that of 1-(5-phosphoribosyl)-5-[(5-phosphoribosylamino)methylideneamino] imidazole-4-carboxamide isomerase from Bacillus cereus (strain ZK / E33L).